Consider the following 271-residue polypeptide: N-acetyltransferase ECO1 (271 aa).

The CCHH-type zinc finger occupies 26-50 (VKCPKCSITYSTNSPSDLVQHKRYH). Residues 109–271 (VMISPKKANE…SGKLLIPCYI (163 aa)) form the N-acetyltransferase domain.

Belongs to the acetyltransferase family. ECO subfamily.

Its subcellular location is the nucleus. In terms of biological role, probable acetyltransferase required for the establishment of sister chromatid cohesion and couple the processes of cohesion and DNA replication to ensure that only sister chromatids become paired together. In contrast to the structural cohesins, the deposition and establishment factors are required only during S phase. Acts by acetylating the cohesin complex component SMC3. This is N-acetyltransferase ECO1 (ECO1) from Kluyveromyces lactis (strain ATCC 8585 / CBS 2359 / DSM 70799 / NBRC 1267 / NRRL Y-1140 / WM37) (Yeast).